Here is a 428-residue protein sequence, read N- to C-terminus: Serine--tRNA ligase (428 aa).

L-serine is bound at residue 235–237 (TAE). ATP is bound at residue 266–268 (RSE). Glu-289 contacts L-serine. 353 to 356 (EISS) is a binding site for ATP. Ser-389 contacts L-serine.

Belongs to the class-II aminoacyl-tRNA synthetase family. Type-1 seryl-tRNA synthetase subfamily. Homodimer. The tRNA molecule binds across the dimer.

It localises to the cytoplasm. It carries out the reaction tRNA(Ser) + L-serine + ATP = L-seryl-tRNA(Ser) + AMP + diphosphate + H(+). It catalyses the reaction tRNA(Sec) + L-serine + ATP = L-seryl-tRNA(Sec) + AMP + diphosphate + H(+). Its pathway is aminoacyl-tRNA biosynthesis; selenocysteinyl-tRNA(Sec) biosynthesis; L-seryl-tRNA(Sec) from L-serine and tRNA(Sec): step 1/1. Catalyzes the attachment of serine to tRNA(Ser). Is also able to aminoacylate tRNA(Sec) with serine, to form the misacylated tRNA L-seryl-tRNA(Sec), which will be further converted into selenocysteinyl-tRNA(Sec). This is Serine--tRNA ligase from Shewanella sediminis (strain HAW-EB3).